The chain runs to 145 residues: Ribonuclease VapC7 (145 aa).

The region spanning 2–129 (IVLDTTVLVY…PAFADLSDVV (128 aa)) is the PINc domain. Residues D5 and D100 each contribute to the Mg(2+) site.

This sequence belongs to the PINc/VapC protein family. Mg(2+) is required as a cofactor.

Its function is as follows. Toxic component of a type II toxin-antitoxin (TA) system. An RNase. The cognate antitoxin is VapB7. The sequence is that of Ribonuclease VapC7 from Mycobacterium tuberculosis (strain ATCC 25618 / H37Rv).